The following is a 117-amino-acid chain: Gamma-aminobutyric acid receptor-associated protein (117 aa).

The interaction with beta-tubulin stretch occupies residues 1–22 (MKFVYKEEHPFEKRRSEGEKIR). An interaction with GABRG2 region spans residues 36–68 (APKARIGDLDKKKYLVPSDLTVGQFYFLIRKRI). Residues 36–117 (APKARIGDLD…AYSDESVYGL (82 aa)) are interaction with GPHN. The interval 48 to 50 (KYL) is interaction with LIR (LC3 nteracting Region) motif of ATG3. Glycine 116 carries Phosphatidylethanolamine amidated glycine; alternate lipidation. Glycine 116 is lipidated: Phosphatidylserine amidated glycine; alternate. Leucine 117 is a propeptide (removed in mature form).

The protein belongs to the ATG8 family. Interacts with GPHN and NSF. Interacts with ATG3, ATG7 and ATG13. Interacts with alpha-tubulin. Interacts with beta-tubulin. Interacts with GABRG2. Interacts with RB1CC1. Interacts with ULK1. Interacts with CALR. Interacts with DDX47. Interacts with TP53INP1 and TP53INP2. Interacts with TBC1D5. Interacts with TBC1D25. Directly interacts with SQSTM1. Interacts with MAPK15. Interacts with TECPR2. Interacts with PCM1. Interacts with TRIM5 and TRIM21. Interacts with MEFV. Interacts with KIF21B. Interacts with WDFY3; this interaction is required for WDFY3 recruitment to MAP1LC3B-positive p62/SQSTM1 bodies. Interacts with FLCN; interaction regulates autophagy. Interacts with UBA5. Interacts with KBTBD6 and KBTBD7; the interaction is direct and required for the ubiquitination of TIAM1. Interacts with reticulophagy regulators RETREG1, RETREG2 and RETREG3. Interacts with IRGM. Interacts with STX17. Interacts with CT55; this interaction may be important for GABARAP protein stability. Interacts with DNM2. Interacts with NCOA4 (via C-terminus). The precursor molecule is cleaved by ATG4 (ATG4A, ATG4B, ATG4C or ATG4D) to expose the glycine at the C-terminus and form the cytosolic form, GABARAP-I. The processed form is then activated by APG7L/ATG7, transferred to ATG3 and conjugated to phosphatidylethanolamine (PE) phospholipid to form the membrane-bound form, GABARAP-II. During non-canonical autophagy, the processed form is conjugated to phosphatidylserine (PS) phospholipid. ATG4 proteins also mediate the delipidation of PE-conjugated forms. In addition, ATG4B and ATG4D mediate delipidation of ATG8 proteins conjugated to PS during non-canonical autophagy. ATG4B constitutes the major protein for proteolytic activation. ATG4D is the main enzyme for delipidation activity. Expressed in brain (at protein level). Can be found in both somatodendritic and axonal compartment of neurons.

It localises to the cytoplasmic vesicle. The protein resides in the autophagosome membrane. It is found in the endomembrane system. Its subcellular location is the cytoplasm. The protein localises to the cytoskeleton. It localises to the golgi apparatus membrane. Its function is as follows. Ubiquitin-like modifier that plays a role in intracellular transport of GABA(A) receptors and its interaction with the cytoskeleton. Involved in autophagy: while LC3s are involved in elongation of the phagophore membrane, the GABARAP/GATE-16 subfamily is essential for a later stage in autophagosome maturation. Through its interaction with the reticulophagy receptor TEX264, participates in the remodeling of subdomains of the endoplasmic reticulum into autophagosomes upon nutrient stress, which then fuse with lysosomes for endoplasmic reticulum turnover. Also required for the local activation of the CUL3(KBTBD6/7) E3 ubiquitin ligase complex, regulating ubiquitination a nd degradation of TIAM1, a guanyl-nucleotide exchange factor (GEF) that activates RAC1 and downstream signal transduction. Thereby, regulates different biological processes including the organization of the cytoskeleton, cell migration and proliferation. Involved in apoptosis. In Rattus norvegicus (Rat), this protein is Gamma-aminobutyric acid receptor-associated protein.